The primary structure comprises 307 residues: Peroxisomal membrane protein PMP34 (307 aa).

The Cytoplasmic segment spans residues 1–9 (MASVLSYES). A necessary for targeting to peroxisomes and interaction with PEX19 region spans residues 1–147 (MASVLSYESL…NEDIIPTNYK (147 aa)). 3 Solcar repeats span residues 7–92 (YESL…LKAV), 99–192 (SSTG…LKRQ), and 200–294 (LSSL…LTAA). The chain crosses the membrane as a helical span at residues 10–30 (LVHAVAGAVGSVTAMTVFFPL). Over 31-66 (DTARLRLQVDEKRKSKTTHAVLLEIIKEEGLLAPYR) the chain is Lumenal. Residues 67 to 87 (GWFPVISSLCCSNFVYFYTFN) form a helical membrane-spanning segment. The Cytoplasmic portion of the chain corresponds to 88–104 (SLKAVWVKGQRSSTGKD). Residues 105–125 (LVVGFVAGVVNVLLTTPLWVV) form a helical membrane-spanning segment. Residues 126 to 160 (NTRLKLQGAKFRNEDIIPTNYKGIIDAFHQIIRDE) lie on the Lumenal side of the membrane. A helical transmembrane segment spans residues 161–181 (GILALWNGTFPSLLLVFNPAI). Topologically, residues 182–202 (QFMFYEGLKRQLLKKRMKLSS) are cytoplasmic. Residues 190–199 (KRQLLKKRMK) carry the Peroxisome localization signal motif. A helical membrane pass occupies residues 203–223 (LDVFIIGAIAKAIATTVTYPM). At 224 to 280 (QTVQSILRFGRHRLNPENRTLGSLRNVLSLLHQRVKRFGIMGLYKGLEAKLLQTVLT) the chain is on the lumenal side. The interval 244-307 (LGSLRNVLSL…VMGLKSTHKH (64 aa)) is necessary for targeting to peroxisomes and interaction with PEX19. A helical membrane pass occupies residues 281–301 (AALMFLVYEKLTAATFTVMGL). At 302–307 (KSTHKH) the chain is on the cytoplasmic side.

The protein belongs to the mitochondrial carrier (TC 2.A.29) family. As to quaternary structure, interacts (via N- and C-terminus peroxisomal targeting regions) with PEX19; the interaction occurs with the newly synthesized SLC25A17 in the cytosol. In terms of tissue distribution, expressed in liver, kidney, heart, spleen, muscle and lung.

It is found in the cytoplasm. The protein resides in the peroxisome membrane. It catalyses the reaction AMP(out) + CoA(in) = AMP(in) + CoA(out). It carries out the reaction 3'-dephospho-CoA(in) + AMP(out) = 3'-dephospho-CoA(out) + AMP(in). The catalysed reaction is acetyl-CoA(in) + AMP(out) = acetyl-CoA(out) + AMP(in). The enzyme catalyses AMP(in) + NAD(+)(out) = AMP(out) + NAD(+)(in). It catalyses the reaction FAD(in) + AMP(out) = FAD(out) + AMP(in). It carries out the reaction FMN(in) + AMP(out) = FMN(out) + AMP(in). The catalysed reaction is AMP(in) + ADP(out) = AMP(out) + ADP(in). The enzyme catalyses adenosine 3',5'-bisphosphate(in) + AMP(out) = adenosine 3',5'-bisphosphate(out) + AMP(in). It catalyses the reaction FAD(in) + CoA(out) = FAD(out) + CoA(in). It carries out the reaction FAD(in) + adenosine 3',5'-bisphosphate(out) = FAD(out) + adenosine 3',5'-bisphosphate(in). The catalysed reaction is FMN(in) + CoA(out) = FMN(out) + CoA(in). The enzyme catalyses FMN(in) + adenosine 3',5'-bisphosphate(out) = FMN(out) + adenosine 3',5'-bisphosphate(in). It catalyses the reaction FAD(out) + NAD(+)(in) = FAD(in) + NAD(+)(out). It carries out the reaction FMN(out) + NAD(+)(in) = FMN(in) + NAD(+)(out). The catalysed reaction is NAD(+)(in) + CoA(out) = NAD(+)(out) + CoA(in). The enzyme catalyses adenosine 3',5'-bisphosphate(out) + NAD(+)(in) = adenosine 3',5'-bisphosphate(in) + NAD(+)(out). It catalyses the reaction FMN(out) + ADP(in) = FMN(in) + ADP(out). It carries out the reaction FAD(out) + ADP(in) = FAD(in) + ADP(out). The catalysed reaction is ADP(out) + CoA(in) = ADP(in) + CoA(out). The enzyme catalyses adenosine 3',5'-bisphosphate(in) + ADP(out) = adenosine 3',5'-bisphosphate(out) + ADP(in). In terms of biological role, peroxisomal transporter for multiple cofactors like coenzyme A (CoA), flavin adenine dinucleotide (FAD), flavin mononucleotide (FMN) and nucleotide adenosine monophosphate (AMP), and to a lesser extent for nicotinamide adenine dinucleotide (NAD(+)), adenosine diphosphate (ADP) and adenosine 3',5'-diphosphate (PAP). May catalyze the transport of free CoA, FAD and NAD(+) from the cytosol into the peroxisomal matrix by a counter-exchange mechanism. This chain is Peroxisomal membrane protein PMP34 (Slc25a17), found in Mus musculus (Mouse).